A 60-amino-acid chain; its full sequence is UPF0434 protein Mfla_2088 (60 aa).

Belongs to the UPF0434 family.

The sequence is that of UPF0434 protein Mfla_2088 from Methylobacillus flagellatus (strain ATCC 51484 / DSM 6875 / VKM B-1610 / KT).